The chain runs to 130 residues: Protein ApaG (130 aa).

In terms of domain architecture, ApaG spans 3–127 (SEVTRSIRVT…FSLDSPHGRS (125 aa)).

This is Protein ApaG from Rhodospirillum centenum (strain ATCC 51521 / SW).